We begin with the raw amino-acid sequence, 80 residues long: Small ribosomal subunit protein bS18 (80 aa).

This sequence belongs to the bacterial ribosomal protein bS18 family. As to quaternary structure, part of the 30S ribosomal subunit. Forms a tight heterodimer with protein bS6.

Its function is as follows. Binds as a heterodimer with protein bS6 to the central domain of the 16S rRNA, where it helps stabilize the platform of the 30S subunit. The sequence is that of Small ribosomal subunit protein bS18 from Acholeplasma laidlawii (strain PG-8A).